A 408-amino-acid polypeptide reads, in one-letter code: Putative FBD-associated F-box protein At5g50270 (408 aa).

An F-box domain is found at 1–54; it reads MDRISGLPDELLLRVLSLLPNVKDVVVTMVLSKRWQFLWMMVPKLVYDDSYQNL. The region spanning 345-408 is the FBD domain; it reads PLRDDLSSVP…VNPDKKYEMI (64 aa).

The chain is Putative FBD-associated F-box protein At5g50270 from Arabidopsis thaliana (Mouse-ear cress).